The chain runs to 269 residues: Adenosylcobinamide-GDP ribazoletransferase (269 aa).

Transmembrane regions (helical) follow at residues 8-28, 41-61, 70-90, 114-136, and 196-216; these read QFNL…PTAI, YFPL…CFML, VCLL…DGLA, IGTY…LSSL, and VPAV…SACV.

Belongs to the CobS family. Mg(2+) is required as a cofactor.

It is found in the cell inner membrane. The enzyme catalyses alpha-ribazole + adenosylcob(III)inamide-GDP = adenosylcob(III)alamin + GMP + H(+). It catalyses the reaction alpha-ribazole 5'-phosphate + adenosylcob(III)inamide-GDP = adenosylcob(III)alamin 5'-phosphate + GMP + H(+). It functions in the pathway cofactor biosynthesis; adenosylcobalamin biosynthesis; adenosylcobalamin from cob(II)yrinate a,c-diamide: step 7/7. In terms of biological role, joins adenosylcobinamide-GDP and alpha-ribazole to generate adenosylcobalamin (Ado-cobalamin). Also synthesizes adenosylcobalamin 5'-phosphate from adenosylcobinamide-GDP and alpha-ribazole 5'-phosphate. The sequence is that of Adenosylcobinamide-GDP ribazoletransferase from Pseudoalteromonas atlantica (strain T6c / ATCC BAA-1087).